Consider the following 211-residue polypeptide: Ubiquitin-conjugating enzyme E2 S-B (211 aa).

Positions 11–157 (HIIRRVYKEV…ARLMTDIHAQ (147 aa)) constitute a UBC core domain. Catalysis depends on Cys95, which acts as the Glycyl thioester intermediate. A disordered region spans residues 158-211 (GTSLRGKDPTDPCSSASTPVVSGDGPMAKKHAGDRDKKLAAKKKTDKKRALRRL). Residues 197–211 (AAKKKTDKKRALRRL) show a composition bias toward basic residues.

Belongs to the ubiquitin-conjugating enzyme family.

It catalyses the reaction S-ubiquitinyl-[E1 ubiquitin-activating enzyme]-L-cysteine + [E2 ubiquitin-conjugating enzyme]-L-cysteine = [E1 ubiquitin-activating enzyme]-L-cysteine + S-ubiquitinyl-[E2 ubiquitin-conjugating enzyme]-L-cysteine.. It functions in the pathway protein modification; protein ubiquitination. In terms of biological role, catalyzes the covalent attachment of ubiquitin to other proteins. Acts as an essential factor of the anaphase promoting complex/cyclosome (APC/C), a cell cycle-regulated ubiquitin ligase that controls progression through mitosis. Acts by specifically elongating 'Lys-11'-linked polyubiquitin chains initiated by the E2 enzyme ube2c/ubch10 on APC/C substrates, enhancing the degradation of APC/C substrates by the proteasome and promoting mitotic exit. The chain is Ubiquitin-conjugating enzyme E2 S-B (ube2s-b) from Xenopus laevis (African clawed frog).